Reading from the N-terminus, the 1470-residue chain is Niemann-Pick type C1-related protein (1470 aa).

Residues 1–3 (MFV) lie on the Cytoplasmic side of the membrane. The stretch at 4-34 (KNFIHKLKELKQKSLDKFANLLYDYGGYVYD) is an intramembrane region. Position 35 (R35) is a topological domain, cytoplasmic. A helical transmembrane segment spans residues 36-56 (PCTFIICSLICCLLLTCGFYF). The Extracellular portion of the chain corresponds to 57–493 (KEHEKDIYKL…DEVDRISKID (437 aa)). 4 N-linked (GlcNAc...) asparagine glycosylation sites follow: N78, N165, N294, and N361. Residues 494–514 (NLTRLLLLIGVLLIFMYALFN) form a helical membrane-spanning segment. Residues 494–653 (NLTRLLLLIG…LTFLLSFLCI (160 aa)) form the SSD domain. Topologically, residues 515–524 (NVTSVLYRSK) are cytoplasmic. The helical transmembrane segment at 525–549 (PLCAVMGIFCGFLGFLSGSGFLYFL) threads the bilayer. Residues 550-554 (GVKSV) are Extracellular-facing. A helical membrane pass occupies residues 555 to 582 (PPAETVPFLVIGVGVDDVFVILNSYSLL). At 583–587 (FMVKD) the chain is on the cytoplasmic side. Residues 588 to 619 (NKKRIQMCLKDSALAITVTTLTNIIAFLISAI) traverse the membrane as a helical segment. Residues 620–622 (SPF) are Extracellular-facing. Residues 623–659 (YSICAFSLFTASSLFFGYLMVLTFLLSFLCIEAKLEK) form a helical membrane-spanning segment. The Cytoplasmic segment spans residues 660 to 663 (KKRN). The stretch at 664–673 (IFTGTFHLFR) is an intramembrane region. The Cytoplasmic portion of the chain corresponds to 674 to 1057 (SIFMKSSKKN…IYEEPKGNIG (384 aa)). An intramembrane segment occupies 1058–1073 (KYFRSLVKNYYVPFLS). S1074 is a topological domain (cytoplasmic). Residues 1075–1098 (RFGKTIVYIMFTIIIAMSIYGCTL) form a helical membrane-spanning segment. The Extracellular segment spans residues 1099–1300 (MKKGIKYDKA…NHNVQMVCFH (202 aa)). N1218 is a glycosylation site (N-linked (GlcNAc...) asparagine). The chain crosses the membrane as a helical span at residues 1301–1334 (LSSIFNETDESIIEVTLINLGITILTILVVTAYI). Topologically, residues 1335–1337 (IKG) are cytoplasmic. Residues 1338 to 1361 (FYSCVIIALIIFLIDLCIFGFMCL) traverse the membrane as a helical segment. The Extracellular segment spans residues 1362–1367 (CGITMN). The chain crosses the membrane as a helical span at residues 1368-1394 (IISMVILVLSVGFSIDHTSHIVQAFSH). The Cytoplasmic portion of the chain corresponds to 1395 to 1399 (SMGRT). The chain crosses the membrane as a helical span at residues 1400 to 1431 (RDEKMKESLHLMIGPVLHSGLSTWFVISTLFF). The Extracellular segment spans residues 1432–1434 (SNK). The chain crosses the membrane as a helical span at residues 1435–1466 (DFTVIFFQTLSLVLFFSITFSSMFLPVLLSSF). The Cytoplasmic segment spans residues 1467–1470 (GPLH).

It belongs to the patched family.

The protein resides in the cell membrane. It catalyses the reaction cholesterol(in) = cholesterol(out). Functionally, facilitates cholesterol efflux from membranes in a pH-dependent manner. Required for maintaining normal parasite plasma membrane lipid composition. Required for the proper functioning of digestive vacuole. Required for the viability of blood-stage parasites. The protein is Niemann-Pick type C1-related protein of Plasmodium falciparum (isolate 3D7).